The sequence spans 190 residues: Protein GrpE (190 aa).

Polar residues predominate over residues 1 to 18 (MTETPNTSSEEIQTSEPS). Positions 1–21 (MTETPNTSSEEIQTSEPSPDN) are disordered.

Belongs to the GrpE family. In terms of assembly, homodimer.

The protein resides in the cytoplasm. Participates actively in the response to hyperosmotic and heat shock by preventing the aggregation of stress-denatured proteins, in association with DnaK and GrpE. It is the nucleotide exchange factor for DnaK and may function as a thermosensor. Unfolded proteins bind initially to DnaJ; upon interaction with the DnaJ-bound protein, DnaK hydrolyzes its bound ATP, resulting in the formation of a stable complex. GrpE releases ADP from DnaK; ATP binding to DnaK triggers the release of the substrate protein, thus completing the reaction cycle. Several rounds of ATP-dependent interactions between DnaJ, DnaK and GrpE are required for fully efficient folding. This chain is Protein GrpE, found in Chlamydia trachomatis serovar L2 (strain ATCC VR-902B / DSM 19102 / 434/Bu).